The chain runs to 371 residues: MLCRLFTLFITAALACCVAAIPLQGQQSNSIIERTPGRWPWHPHRPRPHHPRPHWPFPKPHWPKPHWPKPHWPKPEPEPTAVPTMAPEPTTVPPTEPSGTYPPETTPTVEPTVVPTDVPTTFPSMTPTADPTVAPTGTSVPTGVPTGVPPMPGTIPFGTVINQCTVNGTIALTFDDGPYDYTGPLLDIFAKNGAKGTFFVNAMNFGNIMDYADVIKRMYKEGHMLGSHTYSHADLSKLNSTGIALEMKKLDDILAPIIDGNRPTYMRAPYFAYSDTVSKTMAELKYHMIDANIDTKDYEHATPDGVPISVENFKKGLEAGGTITLCHDVHQTTVELLIQQLLDEIKKRGLRAVTVGECLGDPQANWYRPAQ.

A signal peptide spans 1-20 (MLCRLFTLFITAALACCVAA). The disordered stretch occupies residues 73–112 (PKPEPEPTAVPTMAPEPTTVPPTEPSGTYPPETTPTVEPT). 2 stretches are compositionally biased toward low complexity: residues 79–89 (PTAVPTMAPEP) and 102–112 (PPETTPTVEPT). A disulfide bond links cysteine 164 and cysteine 358. An N-linked (GlcNAc...) asparagine glycan is attached at asparagine 167. Residues 168 to 353 (GTIALTFDDG…EIKKRGLRAV (186 aa)) form the NodB homology domain. Aspartate 175 functions as the Proton acceptor in the catalytic mechanism. Aspartate 175 contacts acetate. Aspartate 176, histidine 228, and histidine 232 together coordinate Co(2+). Asparagine 239 carries N-linked (GlcNAc...) asparagine glycosylation. Acetate is bound at residue tyrosine 270. Catalysis depends on histidine 327, which acts as the Proton donor.

This sequence belongs to the polysaccharide deacetylase family. Co(2+) serves as cofactor.

It catalyses the reaction [(1-&gt;4)-N-acetyl-beta-D-glucosaminyl](n) + n H2O = chitosan + n acetate. In terms of biological role, hydrolyzes the N-acetamido groups of N-acetyl-D-glucosamine residues in chitin to form chitosan and acetate. This Arthroderma benhamiae (strain ATCC MYA-4681 / CBS 112371) (Trichophyton mentagrophytes) protein is Chitin deacetylase.